Reading from the N-terminus, the 373-residue chain is Leucoanthocyanidin dioxygenase 2 (373 aa).

In terms of domain architecture, Fe2OG dioxygenase spans 216-315 (LLLQLKINYY…RVSWVVFCEP (100 aa)). Residues His-240, Asp-242, and His-296 each contribute to the Fe cation site. Arg-306 is a binding site for 2-oxoglutarate.

This sequence belongs to the iron/ascorbate-dependent oxidoreductase family. Requires L-ascorbate as cofactor. The cofactor is Fe(2+).

It carries out the reaction a (2R,3S,4S)-leucoanthocyanidin + 2-oxoglutarate + O2 = a 4-H-anthocyanidin with a 3-hydroxy group + succinate + CO2 + 2 H2O. The protein operates within pigment biosynthesis; anthocyanin biosynthesis. Involved in anthocyanin and protoanthocyanidin biosynthesis by catalyzing the oxidation of leucoanthocyanidins into anthocyanidins. The protein is Leucoanthocyanidin dioxygenase 2 of Oryza sativa subsp. japonica (Rice).